The primary structure comprises 23 residues: Conotoxin Cl6c (23 aa).

Disulfide bonds link Cys2–Cys12, Cys5–Cys17, and Cys11–Cys21.

Expressed by the venom duct.

It is found in the secreted. The polypeptide is Conotoxin Cl6c (Californiconus californicus (California cone)).